The chain runs to 787 residues: Probable basic-leucine zipper transcription factor J (787 aa).

A compositionally biased stretch (low complexity) spans 18-90 (NSNIHNNTHN…NNTQNTNNGT (73 aa)). Disordered stretches follow at residues 18–95 (NSNI…LTPL), 153–173 (LNLSSTGNHEDPVQVPMNNNP), 186–306 (LQSQ…NNNT), 343–372 (DSLLNQTLNNNNNNNNNNNNNNNNTTIQTS), 401–441 (LSSA…NNSN), and 473–507 (ASSESAQSESSQESDYDALNERNSGVKKRGRDEDQ). Low complexity-rich tracts occupy residues 186-223 (LQSQNNNSSNNNNNNNNNGSNTPLNGSNGSNNNYSSPI), 235-258 (SSPIQEYPYYSPSSSPHSNESTSP), 273-305 (NNNNNNNNNNNNNNNNNNNNNNNNNNKNNLNNN), and 351-366 (NNNNNNNNNNNNNNNN). The segment covering 473–483 (ASSESAQSESS) has biased composition (low complexity). A bZIP domain is found at 549–612 (ELKKQRRLVK…KALKKQLYSL (64 aa)). The tract at residues 551–603 (KKQRRLVKNREYASQSRSRRKIYVENIETKLQKTNQDCASIKSQLNSVKEENK) is basic motif. The tract at residues 605-612 (LKKQLYSL) is leucine-zipper. Disordered regions lie at residues 723–747 (SNYIINNNNNESTSETTTNNKVVST) and 763–787 (DKEVPQKCKDSSDLKCDSPPLSPLN). Over residues 763-778 (DKEVPQKCKDSSDLKC) the composition is skewed to basic and acidic residues.

Belongs to the bZIP family.

Its subcellular location is the nucleus. In terms of biological role, probable transcriptional regulator. In Dictyostelium discoideum (Social amoeba), this protein is Probable basic-leucine zipper transcription factor J (bzpJ).